We begin with the raw amino-acid sequence, 334 residues long: MKNRVISLLMASLLLVLSVIVAPFYKAEAATVVNTPFVAVFSNFDSSQWEKADWANGSVFNCVWKPSQVTFSNGKMILTLDREYGGSYPYKSGEYRSKSFFGYGYYEVRMKAAKNVGIVSSFFTYTGPSDNNPWDEIDIEFLGKDTTKAQFNWYKNEVGGNEYLHNLGFDASQDFHTYGFEWRPDYIDFYVDGKKVYRGTRNIPVTPGKIMMNLWPGKGVDEWLGRYDGRTPLQAEYEYVKYYPNGVPQDNPTPTPTIAPSTPTNPNLPLKGDVNGDGHVNSSDYSLFKRYLLRVIDRFPVGDQSVADVNRDGRIDSTDLTMLKRYLIRAIPSL.

Positions 1-27 (MKNRVISLLMASLLLVLSVIVAPFYKA) are cleaved as a signal peptide. Positions 28-248 (EAATVVNTPF…YVKYYPNGVP (221 aa)) constitute a GH16 domain. Residue Glu-136 is the Nucleophile of the active site. Residue Glu-140 is the Proton donor of the active site. The segment at 246 to 265 (GVPQDNPTPTPTIAPSTPTN) is disordered. The Dockerin domain occupies 267 to 334 (NLPLKGDVNG…RYLIRAIPSL (68 aa)).

The protein belongs to the glycosyl hydrolase 16 family.

The enzyme catalyses Hydrolysis of (1-&gt;4)-beta-D-glucosidic linkages in beta-D-glucans containing (1-&gt;3)- and (1-&gt;4)-bonds.. This is Beta-glucanase (licB) from Acetivibrio thermocellus (Hungateiclostridium thermocellum).